The sequence spans 293 residues: MAAIIIRGSDIAQEIREDLKKEAAWLKAYGVVPGLVTILVGQDPASMSYVTAKQKTACKLGFYSLQDSQPGHVSESLLLDRIARYNKDPRIHGILVQLPLPPHIDEQKILYAIDPGKDVDGFHPYNVGKLMIGQADFLPCTPAGIQQLLIRSGIQTDGAEVVVVGRSNIVGKPIANMLLQKQKGANATVTVCHTGTRDVGVHTRRADILIVAAGKPKAITADMVKEGAVVIDVGVNRVGVTSDGKAKLCGDVDFEPVREKAGAITPVPGGVGPMTITMLMVNTLKAARLSAGL.

NADP(+)-binding positions include 165–167 (GRS), Thr194, and Val235.

It belongs to the tetrahydrofolate dehydrogenase/cyclohydrolase family. Homodimer.

It catalyses the reaction (6R)-5,10-methylene-5,6,7,8-tetrahydrofolate + NADP(+) = (6R)-5,10-methenyltetrahydrofolate + NADPH. It carries out the reaction (6R)-5,10-methenyltetrahydrofolate + H2O = (6R)-10-formyltetrahydrofolate + H(+). It participates in one-carbon metabolism; tetrahydrofolate interconversion. Functionally, catalyzes the oxidation of 5,10-methylenetetrahydrofolate to 5,10-methenyltetrahydrofolate and then the hydrolysis of 5,10-methenyltetrahydrofolate to 10-formyltetrahydrofolate. This is Bifunctional protein FolD from Syntrophus aciditrophicus (strain SB).